The primary structure comprises 214 residues: Cdc42 effector protein 2 (214 aa).

Residue S2 is modified to N-acetylserine. Positions 30-44 constitute a CRIB domain; the sequence is ISPPLGDFRHTIHIG. S31, S101, S137, S141, and S145 each carry phosphoserine. Residues 118–151 are disordered; sequence ALTLPTTQAPPKPPRLHLESPQPSPKSSPQEAGN.

Belongs to the BORG/CEP family. As to quaternary structure, interacts with CDC42 and RHOQ, in a GTP-dependent manner, and with SEPT7.

The protein resides in the endomembrane system. The protein localises to the cytoplasm. It is found in the cytoskeleton. Probably involved in the organization of the actin cytoskeleton. May act downstream of CDC42 to induce actin filament assembly leading to cell shape changes. Induces pseudopodia formation in fibroblasts in a CDC42-dependent manner. The sequence is that of Cdc42 effector protein 2 (Cdc42ep2) from Rattus norvegicus (Rat).